Consider the following 383-residue polypeptide: Lipid-A-disaccharide synthase (383 aa).

The protein belongs to the LpxB family.

It carries out the reaction a lipid X + a UDP-2-N,3-O-bis[(3R)-3-hydroxyacyl]-alpha-D-glucosamine = a lipid A disaccharide + UDP + H(+). It functions in the pathway bacterial outer membrane biogenesis; LPS lipid A biosynthesis. Functionally, condensation of UDP-2,3-diacylglucosamine and 2,3-diacylglucosamine-1-phosphate to form lipid A disaccharide, a precursor of lipid A, a phosphorylated glycolipid that anchors the lipopolysaccharide to the outer membrane of the cell. In Anaeromyxobacter dehalogenans (strain 2CP-1 / ATCC BAA-258), this protein is Lipid-A-disaccharide synthase.